We begin with the raw amino-acid sequence, 201 residues long: Small ribosomal subunit protein uS4 (201 aa).

Positions 91–155 (TRLDNVVYRA…STLPFQVARE (65 aa)) constitute an S4 RNA-binding domain.

Belongs to the universal ribosomal protein uS4 family. In terms of assembly, part of the 30S ribosomal subunit. Contacts protein S5. The interaction surface between S4 and S5 is involved in control of translational fidelity.

One of the primary rRNA binding proteins, it binds directly to 16S rRNA where it nucleates assembly of the body of the 30S subunit. Its function is as follows. With S5 and S12 plays an important role in translational accuracy. The polypeptide is Small ribosomal subunit protein uS4 (Nocardia farcinica (strain IFM 10152)).